The chain runs to 118 residues: MLKSIQKRKNKLRAQRKARVKGKIFGTAELPRLTVYKSNKHFYAQAIDDNAGATLASADGRKLGLGANREDVKKVAAEMAKNLASANIETVVFDRNGYLYHGVVASFADALREAGIKF.

It belongs to the universal ribosomal protein uL18 family. Part of the 50S ribosomal subunit; part of the 5S rRNA/L5/L18/L25 subcomplex. Contacts the 5S and 23S rRNAs.

Its function is as follows. This is one of the proteins that bind and probably mediate the attachment of the 5S RNA into the large ribosomal subunit, where it forms part of the central protuberance. This Sulfurovum sp. (strain NBC37-1) protein is Large ribosomal subunit protein uL18.